A 471-amino-acid polypeptide reads, in one-letter code: Putative multidrug resistance protein MdtD (471 aa).

At 1–11 (MTDLPDSTRWQ) the chain is on the periplasmic side. Residues 12–32 (LWIVAFGFFMQSLDTTIVNTA) traverse the membrane as a helical segment. The Cytoplasmic portion of the chain corresponds to 33–48 (LPSMAQSLGESPLHMH). Residues 49–69 (MVIVSYVLTVAVMLPASGWLA) traverse the membrane as a helical segment. Over 70–76 (DKVGVRN) the chain is Periplasmic. The chain crosses the membrane as a helical span at residues 77–97 (IFFTAIVLFTLGSLFCALSGT). At 98 to 101 (LNEL) the chain is on the cytoplasmic side. Residues 102 to 124 (LLARALQGVGGAMMVPVGRLTVM) traverse the membrane as a helical segment. Residues 125–137 (KIVPREQYMAAMT) lie on the Periplasmic side of the membrane. A helical membrane pass occupies residues 138 to 158 (FVTLPGQIGPLLGPALGGLLV). At 159-164 (EYASWH) the chain is on the cytoplasmic side. A helical transmembrane segment spans residues 165-185 (WIFLINIPVGIIGAITTLMLM). Residues 186–196 (PNYTMQTRRFD) lie on the Periplasmic side of the membrane. The chain crosses the membrane as a helical span at residues 197 to 217 (LSGFLLLAVGMAVLTLALDGS). Over 218–224 (KGTGFSP) the chain is Cytoplasmic. The helical transmembrane segment at 225-245 (LAIAGLVAVGVVALVLYLLHA) threads the bilayer. Residues 246-262 (QNNNRALFSLKLFRTRT) lie on the Periplasmic side of the membrane. The helical transmembrane segment at 263–283 (FSLGLAGSFAGRIGSGMLPFM) threads the bilayer. Residues 284-285 (TP) are Cytoplasmic-facing. Residues 286 to 306 (VFLQIGFGFSPFHAGLMMIPM) form a helical membrane-spanning segment. Residues 307-341 (VLGSMGMKRIVVQVVNRFGYRRVLVATTLGLSLVT) lie on the Periplasmic side of the membrane. The helical transmembrane segment at 342–362 (LLFMTTALLGWYYVLPFVLFL) threads the bilayer. Residues 363-395 (QGMVNSTRFSSMNTLTLKDLPDNLASSGNSLLS) lie on the Cytoplasmic side of the membrane. A helical transmembrane segment spans residues 396 to 416 (MIMQLSMSIGVTIAGLLLGLF). Residues 417 to 430 (GSQHVSVDSGTTQT) lie on the Periplasmic side of the membrane. Residues 431 to 451 (VFMYTWLSMASIIALPAFIFA) form a helical membrane-spanning segment. Residues 452–471 (RVPNDTHQNVAISRRKRSAQ) are Cytoplasmic-facing.

It belongs to the major facilitator superfamily. TCR/Tet family.

The protein localises to the cell inner membrane. The protein is Putative multidrug resistance protein MdtD of Escherichia coli O6:H1 (strain CFT073 / ATCC 700928 / UPEC).